The primary structure comprises 155 residues: 6,7-dimethyl-8-ribityllumazine synthase (155 aa).

5-amino-6-(D-ribitylamino)uracil contacts are provided by residues F23, 57–59, and 81–83; these read AFE and AVI. Residue 86-87 participates in (2S)-2-hydroxy-3-oxobutyl phosphate binding; that stretch reads AT. The active-site Proton donor is the H89. F114 contacts 5-amino-6-(D-ribitylamino)uracil. R128 contacts (2S)-2-hydroxy-3-oxobutyl phosphate.

This sequence belongs to the DMRL synthase family.

It carries out the reaction (2S)-2-hydroxy-3-oxobutyl phosphate + 5-amino-6-(D-ribitylamino)uracil = 6,7-dimethyl-8-(1-D-ribityl)lumazine + phosphate + 2 H2O + H(+). It participates in cofactor biosynthesis; riboflavin biosynthesis; riboflavin from 2-hydroxy-3-oxobutyl phosphate and 5-amino-6-(D-ribitylamino)uracil: step 1/2. Its function is as follows. Catalyzes the formation of 6,7-dimethyl-8-ribityllumazine by condensation of 5-amino-6-(D-ribitylamino)uracil with 3,4-dihydroxy-2-butanone 4-phosphate. This is the penultimate step in the biosynthesis of riboflavin. This is 6,7-dimethyl-8-ribityllumazine synthase from Geotalea daltonii (strain DSM 22248 / JCM 15807 / FRC-32) (Geobacter daltonii).